The sequence spans 376 residues: Serine-arginine protein 55 (376 aa).

The RRM 1 domain occupies 4-74 (SRVYVGGLPY…ERVVVEPARG (71 aa)). The tract at residues 73-114 (RGTARGSNRDRYDDRYGGRRGGGGGRYNEKNKNSRSSSRYGP) is disordered. Residues 79-89 (SNRDRYDDRYG) are compositionally biased toward basic and acidic residues. An RRM 2 domain is found at 120–193 (YRLIVENLSS…RRIHLVEDRR (74 aa)). Position 165 is a phosphoserine (serine 165). A compositionally biased stretch (basic and acidic residues) spans 185 to 194 (RIHLVEDRRG). The interval 185-376 (RIHLVEDRRG…PDRNNESMDD (192 aa)) is disordered. The span at 196 to 205 (RSGGGGGSGR) shows a compositional bias: gly residues. 2 stretches are compositionally biased toward basic residues: residues 215-263 (SRSR…SRSN) and 271-283 (SKSK…RSRS). A compositionally biased stretch (basic and acidic residues) spans 284-304 (PKRERDSRSRSRSVSKRESRS).

Belongs to the splicing factor SR family. Extensively phosphorylated on serine residues in the RS domain.

The protein resides in the nucleus. Its function is as follows. Essential for development. May have a critical role in splicing or in controlling alternative splice site use of at least some pre-mRNA in vivo. Not required for all splicing. May play a general role in the condensation or decondensation of chromatin. The protein is Serine-arginine protein 55 (B52) of Drosophila melanogaster (Fruit fly).